Consider the following 175-residue polypeptide: Photosynthetic NDH subunit of subcomplex B 4, chloroplastic (175 aa).

A chloroplast-targeting transit peptide spans 1–24; the sequence is MAEAFTSFTFTNLHIPSSYNHSPK. A helical membrane pass occupies residues 95–111; sequence VYMFYIMFTCWGCLYFG.

Part of the chloroplast NDH complex, composed of a mixture of chloroplast and nucleus encoded subunits. Component of the NDH subcomplex B, at least composed of PnsB1, PnsB2, PnsB3, PnsB4 and PnsB5.

The protein resides in the plastid. The protein localises to the chloroplast thylakoid membrane. In terms of biological role, NDH shuttles electrons from NAD(P)H:plastoquinone, via FMN and iron-sulfur (Fe-S) centers, to quinones in the photosynthetic chain and possibly in a chloroplast respiratory chain. The immediate electron acceptor for the enzyme in this species is believed to be plastoquinone. Couples the redox reaction to proton translocation, and thus conserves the redox energy in a proton gradient. The sequence is that of Photosynthetic NDH subunit of subcomplex B 4, chloroplastic from Arabidopsis thaliana (Mouse-ear cress).